The primary structure comprises 138 residues: Putative pre-16S rRNA nuclease (138 aa).

It belongs to the YqgF nuclease family.

It localises to the cytoplasm. In terms of biological role, could be a nuclease involved in processing of the 5'-end of pre-16S rRNA. This Klebsiella pneumoniae (strain 342) protein is Putative pre-16S rRNA nuclease.